A 583-amino-acid chain; its full sequence is MKKSYSGVTRTSSGRLRRLADPTGPALKRSFEVEEIEPPNSTPPRRVQTPLLRATVASSSQKFQDLGVKNSEPAARLVDSLSQRSPKPSLRRVELAGAKAPEPMSRRTEISIDISSKQVESTASAAGPSRFGLKRAEVLGHKTPEPVPRRTEITIVKPQESVLRRVETPASKIPEGSAVPATDAAPKRVEIQVPKPAEAPNCPLPSQTLENSEAPMSQLQSRLEPRPSVAEVPYRNQEDSEVTPSCVGDMADNPRDAMLKQAPASRNEKAPMEFGYVGIDSILEQMRRKAMKQGFEFNIMVVGQSGLGKSTLINTLFKSKISRKSVQPTSEERIPKTIEIKSITHDIEEKGVRMKLTVIDTPGFGDHINNENCWQPIMKFINDQYEKYLQEEVNINRKKRIPDTRVHCCLYFIPATGHSLRPLDIEFMKRLSKVVNIVPVIAKADTLTLEERVYFKQRITADLLSNGIDVYPQKEFDEDAEDRLVNEKFREMIPFAVVGSDHEYQVNGKRILGRKTKWGTIEVENTTHCEFAYLRDLLIRTHMQNIKDITSNIHFEAYRVKRLNEGNSAMANGIEKEPEAQEM.

The residue at position 1 (M1) is an N-acetylmethionine. Polar residues predominate over residues 1–14 (MKKSYSGVTRTSSG). Residues 1–49 (MKKSYSGVTRTSSGRLRRLADPTGPALKRSFEVEEIEPPNSTPPRRVQT) form a disordered region. Position 30 is a phosphoserine (S30). T42 and T49 each carry phosphothreonine. Residue K62 is modified to N6-acetyllysine. A disordered region spans residues 79-105 (DSLSQRSPKPSLRRVELAGAKAPEPMS). Phosphoserine is present on residues S82, S85, and S89. The residue at position 143 (T143) is a Phosphothreonine. A disordered region spans residues 166 to 252 (VETPASKIPE…TPSCVGDMAD (87 aa)). Residues 204 to 221 (LPSQTLENSEAPMSQLQS) are compositionally biased toward polar residues. Position 276 is a phosphotyrosine (Y276). One can recognise a Septin-type G domain in the interval 293–565 (QGFEFNIMVV…EAYRVKRLNE (273 aa)). A G1 motif region spans residues 303–310 (GQSGLGKS). A GTP-binding site is contributed by 303-310 (GQSGLGKS). Phosphoserine is present on residues S325 and S330. GTP-binding positions include T337, G363, 443–451 (KADTLTLEE), G499, and R514. The tract at residues 360-363 (DTPG) is G3 motif. The interval 442–445 (AKAD) is G4 motif.

Belongs to the TRAFAC class TrmE-Era-EngA-EngB-Septin-like GTPase superfamily. Septin GTPase family. As to quaternary structure, septins polymerize into heterooligomeric protein complexes that form filaments, and associate with cellular membranes, actin filaments, and microtubules. GTPase activity is required for filament formation. Interacts with SEPTIN2, SEPTIN6, SEPTIN7, SEPTIN11 and SEPTIN14. Interacts with RTKN and ARHGEF18. As to expression, expressed in all tissues examined except muscle. Isoforms are differentially expressed in testes, kidney, liver, heart, spleen and brain.

The protein resides in the cytoplasm. It is found in the cytoskeleton. Its function is as follows. Filament-forming cytoskeletal GTPase. May play a role in cytokinesis (Potential). The polypeptide is Septin-9 (Mus musculus (Mouse)).